The primary structure comprises 84 residues: uncharacterized protein (84 aa).

The helical transmembrane segment at 7–23 threads the bilayer; that stretch reads AFSGVIALYGGYLYLRL.

It localises to the membrane. This is an uncharacterized protein from Haemophilus influenzae (strain ATCC 51907 / DSM 11121 / KW20 / Rd).